Here is a 612-residue protein sequence, read N- to C-terminus: Kelch-like protein 40a (612 aa).

Positions 34–101 constitute a BTB domain; that stretch reads VDCILKIKDK…IYTSDINLTE (68 aa). The BACK domain maps to 136–238; sequence CLAIFRLGLL…PTSYFKEKVE (103 aa). Over residues 266-275 the composition is skewed to basic residues; it reads RVKRSSHRKE. The disordered stretch occupies residues 266–290; the sequence is RVKRSSHRKEGKSAEFESDDDDEDG. Over residues 281-290 the composition is skewed to acidic residues; the sequence is FESDDDDEDG. 5 Kelch repeats span residues 350-402, 403-452, 453-500, 502-547, and 549-604; these read QIFV…EAEN, SIYV…SHKG, LVYV…VHKN, IYVV…ELGG, and LYAI…GVRL.

This sequence belongs to the KLHL40 family. As to quaternary structure, component of the BCR(KLHL40) E3 ubiquitin ligase complex. In terms of tissue distribution, expressed in skeletal muscle and heart. Detected, although at much lower levels, in brain, eye and fin.

It localises to the cytoplasm. The protein resides in the myofibril. It is found in the sarcomere. Its subcellular location is the a band. The protein localises to the i band. Substrate-specific adapter of a BCR (BTB-CUL3-RBX1) E3 ubiquitin ligase complex. Required for skeletal muscle development. In Danio rerio (Zebrafish), this protein is Kelch-like protein 40a (klhl40a).